We begin with the raw amino-acid sequence, 307 residues long: MLKNKHLLDPSDFTIEEFDEIFKLAHQIMANPKEYQNICNGKILATLFYEPSTRTRLSFESAMLRLGGQVIGFSEPNSSSVSKGESLRDTIKTVNCYADLIAMRHPLEGAAKVASMYSDIPVINAGDGGHQHPTQTLTDLLTIKEYKGNLEGNTIALCGDLKFGRTVHSLIKALSRYKNNKFILISPIELRIPNYIREQILEKNNIEYKEITSLEEGIKEANILYMTRIQRERFVDQSEYERLKDVYVLDEAKMKGAKEDMMVLHPLPRVNEISYEVDEDSRAFYFKQAKCGMYVRMALMAKLLGEA.

R54 and T55 together coordinate carbamoyl phosphate. K83 is an L-aspartate binding site. The carbamoyl phosphate site is built by R104, H132, and Q135. Residues R165 and R228 each contribute to the L-aspartate site. Positions 267 and 268 each coordinate carbamoyl phosphate.

Belongs to the aspartate/ornithine carbamoyltransferase superfamily. ATCase family. In terms of assembly, heterododecamer (2C3:3R2) of six catalytic PyrB chains organized as two trimers (C3), and six regulatory PyrI chains organized as three dimers (R2).

The enzyme catalyses carbamoyl phosphate + L-aspartate = N-carbamoyl-L-aspartate + phosphate + H(+). It functions in the pathway pyrimidine metabolism; UMP biosynthesis via de novo pathway; (S)-dihydroorotate from bicarbonate: step 2/3. Catalyzes the condensation of carbamoyl phosphate and aspartate to form carbamoyl aspartate and inorganic phosphate, the committed step in the de novo pyrimidine nucleotide biosynthesis pathway. This Clostridium perfringens (strain 13 / Type A) protein is Aspartate carbamoyltransferase catalytic subunit.